The following is a 355-amino-acid chain: Peptide chain release factor 1 (355 aa).

At Gln-233 the chain carries N5-methylglutamine. Over residues 280–293 the composition is skewed to basic and acidic residues; that stretch reads KRRQKEQERSDSRR. Residues 280-310 form a disordered region; the sequence is KRRQKEQERSDSRRGQVGSGDRSERIRTYNF.

This sequence belongs to the prokaryotic/mitochondrial release factor family. Post-translationally, methylated by PrmC. Methylation increases the termination efficiency of RF1.

The protein localises to the cytoplasm. In terms of biological role, peptide chain release factor 1 directs the termination of translation in response to the peptide chain termination codons UAG and UAA. This chain is Peptide chain release factor 1 (prfA), found in Rickettsia prowazekii (strain Madrid E).